A 259-amino-acid chain; its full sequence is Phosphatidylglycerol--prolipoprotein diacylglyceryl transferase (259 aa).

4 helical membrane passes run 9 to 29 (IIFS…VIGI), 55 to 75 (FITY…VLLY), 92 to 112 (EGGM…YLFC), and 117 to 137 (INFL…LFLG). Arg138 lines the a 1,2-diacyl-sn-glycero-3-phospho-(1'-sn-glycerol) pocket. The next 3 helical transmembrane spans lie at 172 to 192 (QLYE…YTTF), 201 to 221 (GLNS…IEIF), and 228 to 248 (IGFI…MLLL).

Belongs to the Lgt family.

It is found in the cell inner membrane. The catalysed reaction is L-cysteinyl-[prolipoprotein] + a 1,2-diacyl-sn-glycero-3-phospho-(1'-sn-glycerol) = an S-1,2-diacyl-sn-glyceryl-L-cysteinyl-[prolipoprotein] + sn-glycerol 1-phosphate + H(+). The protein operates within protein modification; lipoprotein biosynthesis (diacylglyceryl transfer). In terms of biological role, catalyzes the transfer of the diacylglyceryl group from phosphatidylglycerol to the sulfhydryl group of the N-terminal cysteine of a prolipoprotein, the first step in the formation of mature lipoproteins. In Rickettsia conorii (strain ATCC VR-613 / Malish 7), this protein is Phosphatidylglycerol--prolipoprotein diacylglyceryl transferase.